The sequence spans 372 residues: Alpha-parvin (372 aa).

The span at 1-11 (MATSPQKSPSV) shows a compositional bias: low complexity. The interval 1–44 (MATSPQKSPSVPKSPTPKSPPSRKKDDSFLGKLGGTLARRKKAK) is disordered. N-acetylalanine is present on alanine 2. Phosphoserine is present on residues serine 8, serine 14, and serine 19. Positions 21–25 (PSRKK) are interaction with ARHGAP31. Serine 28 and serine 62 each carry phosphoserine. Calponin-homology (CH) domains follow at residues 95-202 (QELM…QYFR) and 262-369 (NVVK…TKYR). The tract at residues 223–372 (GILQSRQIQE…NLFTKYRNVE (150 aa)) is required for interaction with TESK1 and ILK.

This sequence belongs to the parvin family. In terms of assembly, component of the heterotrimeric IPP (ILK-PINCH-PARVIN) complex composed of ILK, LIMS1/PINCH and PARVA; the complex binds to F-actin via the C-terminal tail of LIMS1 and the N-terminal region of PARVA, promoting F-actin filament bundling. Interacts with TGFB1I1. Interacts with ARHGAP31. Interacts with the actin cytoskeleton. Interacts (via C-terminus) with TESK1 (via C-terminus); the interaction inhibits TESK1 kinase activity. Interacts with PXN/PAXILLIN (via LD motif 4). In terms of tissue distribution, widely expressed.

The protein localises to the cell junction. It localises to the focal adhesion. The protein resides in the cell membrane. It is found in the cytoplasm. Its subcellular location is the cytoskeleton. The protein localises to the myofibril. It localises to the sarcomere. The protein resides in the z line. Its function is as follows. Plays a role in sarcomere organization and in smooth muscle cell contraction. Required for normal development of the embryonic cardiovascular system, and for normal septation of the heart outflow tract. Plays a role in sprouting angiogenesis and is required for normal adhesion of vascular smooth muscle cells to endothelial cells during blood vessel development. Plays a role in the reorganization of the actin cytoskeleton, formation of lamellipodia and ciliogenesis. Plays a role in the establishment of cell polarity, cell adhesion, cell spreading, and directed cell migration. Within the IPP (ILK-PINCH-PARVIN) complex, binds to F-actin, promoting F-actin bundling, a process required to generate force for actin cytoskeleton reorganization and subsequent dynamic cell adhesion events such as cell spreading and migration. The protein is Alpha-parvin (Parva) of Rattus norvegicus (Rat).